We begin with the raw amino-acid sequence, 269 residues long: Shikimate dehydrogenase (NADP(+)) (269 aa).

Shikimate contacts are provided by residues 22–24 and threonine 68; that span reads TLS. Lysine 72 (proton acceptor) is an active-site residue. Shikimate contacts are provided by asparagine 93 and aspartate 104. Residues 128-132, 152-157, and phenylalanine 210 each bind NADP(+); these read GAGGA and NRTNLR. Residue tyrosine 212 participates in shikimate binding. Residue glycine 233 coordinates NADP(+).

This sequence belongs to the shikimate dehydrogenase family. As to quaternary structure, homodimer.

The enzyme catalyses shikimate + NADP(+) = 3-dehydroshikimate + NADPH + H(+). Its pathway is metabolic intermediate biosynthesis; chorismate biosynthesis; chorismate from D-erythrose 4-phosphate and phosphoenolpyruvate: step 4/7. Its function is as follows. Involved in the biosynthesis of the chorismate, which leads to the biosynthesis of aromatic amino acids. Catalyzes the reversible NADPH linked reduction of 3-dehydroshikimate (DHSA) to yield shikimate (SA). The sequence is that of Shikimate dehydrogenase (NADP(+)) from Saccharolobus islandicus (strain Y.N.15.51 / Yellowstone #2) (Sulfolobus islandicus).